The primary structure comprises 92 residues: MGSSRFLVLMVSLALVTLVAAEGVKGNIEKPEVCPADNVRCIKSDPPQCHTDQDCQGIRKCCYLHCGFKCVIPVKELEEGGNQDEDVSRPCP.

Residues 1 to 23 (MGSSRFLVLMVSLALVTLVAAEG) form the signal peptide. Residues 27–74 (NIEKPEVCPADNVRCIKSDPPQCHTDQDCQGIRKCCYLHCGFKCVIPV) enclose the WAP domain. 4 disulfide bridges follow: Cys34–Cys62, Cys41–Cys66, Cys49–Cys61, and Cys55–Cys70.

The protein resides in the secreted. Antibacterial protein. Putative acid-stable proteinase inhibitor. The polypeptide is WAP four-disulfide core domain protein 12 (WFDC12) (Aotus nancymaae (Ma's night monkey)).